The chain runs to 326 residues: Ribosome biogenesis protein BRX1 homolog (326 aa).

Residues 1–17 (MVKPSKILEKIKKRTEP) are compositionally biased toward basic and acidic residues. The segment at 1–66 (MVKPSKILEK…EENKNIEENK (66 aa)) is disordered. The span at 22–57 (VVEEESDEEIIEQEGSEEEEEIVEEESEEEEEEVEE) shows a compositional bias: acidic residues. Positions 75-268 (KRVLFTSTRG…IDKIFSDGFG (194 aa)) constitute a Brix domain.

This sequence belongs to the BRX1 family.

The protein resides in the nucleus. It is found in the nucleolus. Its function is as follows. Required for biogenesis of the 60S ribosomal subunit. The chain is Ribosome biogenesis protein BRX1 homolog (bxdc2) from Dictyostelium discoideum (Social amoeba).